The following is a 722-amino-acid chain: Delta-like protein 1 (722 aa).

Positions 1-17 (MGRRSALALAVVSALLC) are cleaved as a signal peptide. Topologically, residues 18 to 545 (QVWSSGVFEL…MESQGGPFPW (528 aa)) are extracellular. The region spanning 176-220 (FVCDEHYYGEGCSVFCRPRDDAFGHFTCGDRGEKMCDPGWKGQYC) is the DSL domain. 27 disulfide bridges follow: cysteine 178–cysteine 187, cysteine 191–cysteine 203, cysteine 211–cysteine 220, cysteine 225–cysteine 236, cysteine 229–cysteine 242, cysteine 244–cysteine 253, cysteine 256–cysteine 267, cysteine 262–cysteine 273, cysteine 275–cysteine 284, cysteine 291–cysteine 303, cysteine 297–cysteine 313, cysteine 315–cysteine 324, cysteine 331–cysteine 342, cysteine 336–cysteine 351, cysteine 353–cysteine 362, cysteine 369–cysteine 380, cysteine 374–cysteine 390, cysteine 392–cysteine 401, cysteine 408–cysteine 419, cysteine 413–cysteine 428, cysteine 430–cysteine 439, cysteine 446–cysteine 457, cysteine 451–cysteine 466, cysteine 468–cysteine 477, cysteine 484–cysteine 495, cysteine 489–cysteine 504, and cysteine 506–cysteine 515. EGF-like domains are found at residues 225 to 253 (CLPG…GRYC), 256 to 284 (CIRY…GLFC), and 291 to 324 (CTHH…GANC). The region spanning 331–362 (CAPSPCKNGASCTDLEDSFSCTCPPGFYGKVC) is the EGF-like 4; calcium-binding domain. 2 consecutive EGF-like domains span residues 369–401 (CADG…GFNC) and 408–439 (CGSS…GRYC). Positions 446–477 (CASSPCANGGTCRDSVNDFSCTCPPGYTGKNC) constitute an EGF-like 7; calcium-binding domain. Asparagine 476 carries an N-linked (GlcNAc...) asparagine glycan. An EGF-like 8 domain is found at 484–515 (CEHAPCHNGATCHQRGQRYMCECAQGYGGPNC). The chain crosses the membrane as a helical span at residues 546–568 (VAVCAGVVLVLLLLLGCAAVVVC). Residues 569–722 (VRLKLQKHQP…KDECVIATEV (154 aa)) are Cytoplasmic-facing. Lysine 613 participates in a covalent cross-link: Glycyl lysine isopeptide (Lys-Gly) (interchain with G-Cter in ubiquitin). At threonine 638 the chain carries Phosphothreonine. Residues 655-664 (RDTHSKRDTK) are compositionally biased toward basic and acidic residues. Positions 655–697 (RDTHSKRDTKCQSQSSAGEEKIAPTLRGGEIPDRKRPESVYST) are disordered. The residue at position 693 (serine 693) is a Phosphoserine; by PKB. A Phosphoserine modification is found at serine 696. The tract at residues 719–722 (ATEV) is interaction with MAGI1.

Homodimer. Interacts with TJP1. Interacts with MMP14; inhibits DLL1-induced Notch signaling. Interacts with MAGI1 (via PDZ domain); forms a complex with CTNNB1 and CDH2 and promotes recruitment to the adherens junction and stabilization on the cell surface. Interacts with PSEN1; undergoes a presenilin-dependent gamma-secretase cleavage that releases a Dll1-intracellular form. Interacts with MFAP5. Interacts with MIB1. Interacts with NEURL1B; leads to ubiquitination. Interacts with NEURL1. Interacts with SYNJ2BP; enhances DLL1 protein stability, and promotes Notch signaling in endothelial cells. Interacts with MAGI1, MAGI2, MAGI3 and MPDZ. Interacts (via ubiquitin) with EPN1 (via IUM domain); binding with NOTCH1 attached to neighboring cell, promotes ligand ubiquitination and EPN1 interaction, leading to NECD transendocytosis and Notch signaling. Interacts with NOTCH1. Ubiquitinated by MIB (MIB1 or MIB2), leading to its endocytosis and subsequent degradation. Ubiquitinated; promotes recycling back to the plasma membrane and confers a strong affinity for NOTCH1. Multi-ubiquitination of Lys-613 by MIB1 promotes both cis and trans-interaction with NOTCH1, as well as activation of Notch signaling. Ubiquitinated by NEURL1B. Post-translationally, phosphorylated in a membrane association-dependent manner. Phosphorylation at Ser-696 requires the presence of Ser-693, whereas phosphorylation at Thr-638 and Ser-693 occurs independently of the other sites. Phosphorylation is required for full ligand activity in vitro and affects surface presentation, ectodomain shedding, and endocytosis. In terms of processing, cleaved by MMP14; negatively regulates DLL1-induced Notch signaling in HPCs, modulating B-lymphocyte differentiation in bone marrow. Undergoes two consecutive processing events: a shedding event, partially by ADAM10, that generates a soluble extracellular form and an intracellular membrane-anchored form, followed by a gamma-secretase cleavage releasing an intracellular fragment. O-fucosylated. Can be elongated to a disaccharide by MFNG. As to expression, in the embryo, expressed in the paraxial mesoderm and nervous system. Expressed at high levels in adult heart and at lower levels, in adult lung. Highly expressed in satellite cells from masseter and tongue than in satellite cells from leg and extraocular muscle.?.

The protein localises to the apical cell membrane. It localises to the cell junction. The protein resides in the adherens junction. Its subcellular location is the membrane raft. It is found in the cell membrane. The protein localises to the nucleus. Functionally, transmembrane ligand protein of NOTCH1, NOTCH2 and NOTCH3 receptors that binds the extracellular domain (ECD) of Notch receptor in a cis and trans fashion manner. Following transinteraction, ligand cells produce mechanical force that depends of a clathrin-mediated endocytosis, requiring ligand ubiquitination, EPN1 interaction, and actin polymerisation; these events promote Notch receptor extracellular domain (NECD) transendocytosis and triggers Notch signaling through induction of cleavage, hyperphosphorylation, and nuclear accumulation of the intracellular domain of Notch receptors (NICD). Is required for embryonic development and maintenance of adult stem cells in many different tissues and immune systeme; the DLL1-induced Notch signaling is mediated through an intercellular communication that regulates cell lineage, cell specification, cell patterning and morphogenesis through effects on differentiation and proliferation. Plays a role in brain development at different level, namely by regulating neuronal differentiation of neural precursor cells via cell-cell interaction, most likely through the lateral inhibitory system in an endogenous level dependent-manner. During neocortex development, Dll1-Notch signaling transmission is mediated by dynamic interactions between intermediate neurogenic progenitors and radial glia; the cell-cell interactions are mediated via dynamic and transient elongation processes, likely to reactivate/maintain Notch activity in neighboring progenitors, and coordinate progenitor cell division and differentiation across radial and zonal boundaries. During cerebellar development, regulates Bergmann glial monolayer formation and its morphological maturation through a Notch signaling pathway. At the retina and spinal cord level, regulates neurogenesis by preventing the premature differentiation of neural progenitors and also by maintaining progenitors in spinal cord through Notch signaling pathway. Also controls neurogenesis of the neural tube in a progenitor domain-specific fashion along the dorsoventral axis. Maintains quiescence of neural stem cells and plays a role as a fate determinant that segregates asymmetrically to one daughter cell during neural stem cells mitosis, resulting in neuronal differentiation in Dll1-inheriting cell. Plays a role in immune systeme development, namely the development of all T-cells and marginal zone (MZ) B cells. Blocks the differentiation of progenitor cells into the B-cell lineage while promoting the emergence of a population of cells with the characteristics of a T-cell/NK-cell precursor. Upon MMP14 cleavage, negatively regulates Notch signaling in haematopoietic progenitor cells to specifically maintain normal B-cell development in bone marrow. Also plays a role during muscle development. During early development, inhibits myoblasts differentiation from the medial dermomyotomal lip and later regulates progenitor cell differentiation. Directly modulates cell adhesion and basal lamina formation in satellite cells through Notch signaling. Maintains myogenic progenitors pool by suppressing differentiation through down-regulation of MYOD1 and is required for satellite cell homing and PAX7 expression. During craniofacial and trunk myogenesis suppresses differentiation of cranial mesoderm-derived and somite-derived muscle via MYOD1 regulation but in cranial mesoderm-derived progenitors, is neither required for satellite cell homing nor for PAX7 expression. Also plays a role during pancreatic cell development. During type B pancreatic cell development, may be involved in the initiation of proximodistal patterning in the early pancreatic epithelium. Stimulates multipotent pancreatic progenitor cells proliferation and pancreatic growth by maintaining HES1 expression and PTF1A protein levels. During fetal stages of development, is required to maintain arterial identity and the responsiveness of arterial endothelial cells for VEGFA through regulation of KDR activation and NRP1 expression. Controls sprouting angiogenesis and subsequent vertical branch formation through regulation on tip cell differentiation. Negatively regulates goblet cell differentiation in intestine and controls secretory fat commitment through lateral inhibition in small intestine. Plays a role during inner ear development; negatively regulates auditory hair cell differentiation. Plays a role during nephron development through Notch signaling pathway. Regulates growth, blood pressure and energy homeostasis. The polypeptide is Delta-like protein 1 (Dll1) (Mus musculus (Mouse)).